A 102-amino-acid chain; its full sequence is Large ribosomal subunit protein bL21 (102 aa).

This sequence belongs to the bacterial ribosomal protein bL21 family. As to quaternary structure, part of the 50S ribosomal subunit. Contacts protein L20.

Its function is as follows. This protein binds to 23S rRNA in the presence of protein L20. This Geobacillus thermodenitrificans (strain NG80-2) protein is Large ribosomal subunit protein bL21.